Reading from the N-terminus, the 150-residue chain is Protein NrdI (150 aa).

It belongs to the NrdI family.

Functionally, probably involved in ribonucleotide reductase function. The sequence is that of Protein NrdI from Mycobacterium avium (strain 104).